A 345-amino-acid polypeptide reads, in one-letter code: MKVLGIETSCDETGVAIYDSEQGLIANQLYTQIALHADYGGVVPELASRDHIRKTAPLIRAALKEADLTAEDIDGIAYTAGPGLVGALLVGATIARSLAFAWNVPAVSVHHMEGHLLAPMLESPQNRPHFPFVALLVSGGHTQLVRVDGVGKYELLGESIDDAAGEAFDKTAKLLGLDYPGGAALSRLAEKGSAGRFTFPKPMTDRPGLDFSFSGLKTAAANTIRQTIKQKGDLTEQTKADIAHAFQTAVVETLAIKCKRALQQTGYNTLVIAGGVSANKQLRHRLAQLMHALGGKVFYPSPQFCTDNGAMIAYVGHLRLQAGESSGLEVDVKPRWVMTELPALA.

Fe cation-binding residues include His-111 and His-115. Substrate is bound by residues 136 to 140 (LVSGG), Asp-169, Gly-182, and Asn-279. A Fe cation-binding site is contributed by Asp-307.

The protein belongs to the KAE1 / TsaD family. Fe(2+) serves as cofactor.

It is found in the cytoplasm. It carries out the reaction L-threonylcarbamoyladenylate + adenosine(37) in tRNA = N(6)-L-threonylcarbamoyladenosine(37) in tRNA + AMP + H(+). Its function is as follows. Required for the formation of a threonylcarbamoyl group on adenosine at position 37 (t(6)A37) in tRNAs that read codons beginning with adenine. Is involved in the transfer of the threonylcarbamoyl moiety of threonylcarbamoyl-AMP (TC-AMP) to the N6 group of A37, together with TsaE and TsaB. TsaD likely plays a direct catalytic role in this reaction. The sequence is that of tRNA N6-adenosine threonylcarbamoyltransferase from Actinobacillus succinogenes (strain ATCC 55618 / DSM 22257 / CCUG 43843 / 130Z).